The primary structure comprises 529 residues: Beta-hexosaminidase subunit alpha (529 aa).

Positions 1–22 (MAGSTLRFSLLLAAAFAGRATA) are cleaved as a signal peptide. Positions 23–88 (LWPWPQYIQT…RFPHPIEKRH (66 aa)) are excised as a propeptide. The cysteines at positions 58 and 104 are disulfide-linked. Residues N115, N157, and N295 are each glycosylated (N-linked (GlcNAc...) asparagine). A disulfide bridge connects residues C277 and C328. The active-site Proton donor is the E323. The tract at residues 423–424 (NH) is critical for hydrolysis GM2 gangliosides. The cysteines at positions 505 and 522 are disulfide-linked.

It belongs to the glycosyl hydrolase 20 family. In terms of assembly, there are 3 beta-hexosaminidase isozymes: isozyme A (hexosaminidase A) is a heterodimer composed of one subunit alpha and one subunit beta (chain A and B); isozyme B (hexosaminidase B) is a homodimer of two beta subunits (two chains A and B); isozyme S (hexosaminidase S) is a homodimer of two alpha subunits. The composition of the dimer (isozyme A versus isozyme S) has a significant effect on the substrate specificity of the alpha subunit active site.

The protein localises to the lysosome. The catalysed reaction is Hydrolysis of terminal non-reducing N-acetyl-D-hexosamine residues in N-acetyl-beta-D-hexosaminides.. The enzyme catalyses N-acetyl-beta-D-galactosaminyl-(1-&gt;4)-beta-D-3-sulfogalactosyl-(1-&gt;4)-beta-D-glucosyl-(1&lt;-&gt;1')-ceramide + H2O = a beta-D-3-sulfogalactosyl-(1-&gt;4)-beta-D-glucosyl-(1&lt;-&gt;1')-ceramide + N-acetyl-beta-D-galactosamine. It carries out the reaction a ganglioside GM2 (d18:1(4E)) + H2O = a ganglioside GM3 (d18:1(4E)) + N-acetyl-beta-D-galactosamine. It catalyses the reaction a ganglioside GM2 + H2O = a ganglioside GM3 + N-acetyl-beta-D-galactosamine. The catalysed reaction is beta-D-GalNAc-(1-&gt;4)-alpha-L-IdoA-(1-&gt;3)-beta-D-GalNAc-4-sulfate-(1-&gt;4)-alpha-L-IdoA-(1-&gt;3)-D-GalNAc-4-sulfate + H2O = alpha-L-IdoA-(1-&gt;3)-beta-D-GalNAc-4-sulfate-(1-&gt;4)-alpha-L-IdoA-(1-&gt;3)-D-GalNAc-4-sulfate + N-acetyl-D-galactosamine. The enzyme catalyses N-acetyl-beta-D-6-sulfogalactosaminyl-(1-&gt;4)-alpha-L-iduronyl-(1-&gt;3)-N-acetyl-D-6-sulfogalactosamine + H2O = alpha-L-iduronyl-(1-&gt;3)-N-acetyl-D-6-sulfogalactosamine + N-acetyl-D-6-sulfogalactosamine. Its activity is regulated as follows. Addition of GM2A stimulates the hydrolysis of sulfated glycosphingolipid SM2 and the ganglioside GM2. Functionally, hydrolyzes the non-reducing end N-acetyl-D-hexosamine and/or sulfated N-acetyl-D-hexosamine of glycoconjugates, such as the oligosaccharide moieties from proteins and neutral glycolipids, or from certain mucopolysaccharides. The isozyme S is as active as the isozyme A on the anionic bis-sulfated glycans, the chondroitin-6-sulfate trisaccharide (C6S-3), and the dermatan sulfate pentasaccharide, and the sulfated glycosphingolipid SM2. The isozyme B does not hydrolyze each of these substrates, however hydrolyzes efficiently neutral oligosaccharide. Only the isozyme A is responsible for the degradation of GM2 gangliosides in the presence of GM2A. The sequence is that of Beta-hexosaminidase subunit alpha from Bos taurus (Bovine).